The primary structure comprises 248 residues: MKSYIEPFIASKALSQNSQKAYRYDLQQFCQLVGERVNQDKLLLYQNSIANLSLSAKKRKLSTANQFLYYLYQIKYLNSYFRLTDTMKVMRTEKQQAAIINTDIFYQKTPFVWGQLISLLILELGLTPSEVAGIEVANLDLNFQMLTLKTKKGVRVLPLSQILIPFLEQQLIGKEVYLFEHRGIPFSRQWFFNHLKTFVRSIGYEGLTAQKLREQFILKEKLAGKSIIELSDILGLKSPVTLEKYYKS.

Positions 1–72 (MKSYIEPFIA…TANQFLYYLY (72 aa)) constitute a Core-binding (CB) domain. One can recognise a Tyr recombinase domain in the interval 85-248 (DTMKVMRTEK…PVTLEKYYKS (164 aa)). Residues Lys149 and Arg213 contribute to the active site. The active-site O-(3'-phospho-DNA)-tyrosine intermediate is Tyr245.

The protein belongs to the 'phage' integrase family. XerD-like subfamily.

The protein resides in the cytoplasm. In terms of biological role, putative tyrosine recombinase. Not involved in the cutting and rejoining of the recombining DNA molecules on dif(SL) site. The sequence is that of Tyrosine recombinase XerD-like from Streptococcus pyogenes serotype M4 (strain MGAS10750).